Reading from the N-terminus, the 288-residue chain is Homoserine kinase (288 aa).

79-89 provides a ligand contact to ATP; the sequence is PPARGLGSSSA.

This sequence belongs to the GHMP kinase family. Homoserine kinase subfamily.

Its subcellular location is the cytoplasm. It catalyses the reaction L-homoserine + ATP = O-phospho-L-homoserine + ADP + H(+). It functions in the pathway amino-acid biosynthesis; L-threonine biosynthesis; L-threonine from L-aspartate: step 4/5. In terms of biological role, catalyzes the ATP-dependent phosphorylation of L-homoserine to L-homoserine phosphate. This Listeria monocytogenes serotype 4b (strain CLIP80459) protein is Homoserine kinase.